The following is a 119-amino-acid chain: Large ribosomal subunit protein bL20 (119 aa).

It belongs to the bacterial ribosomal protein bL20 family.

Functionally, binds directly to 23S ribosomal RNA and is necessary for the in vitro assembly process of the 50S ribosomal subunit. It is not involved in the protein synthesizing functions of that subunit. The chain is Large ribosomal subunit protein bL20 from Albidiferax ferrireducens (strain ATCC BAA-621 / DSM 15236 / T118) (Rhodoferax ferrireducens).